A 270-amino-acid polypeptide reads, in one-letter code: Fluoride-specific ion channel FluC 2 (270 aa).

Helical transmembrane passes span isoleucine 4–leucine 24, leucine 35–tyrosine 55, isoleucine 67–valine 87, and alanine 96–leucine 116. Na(+)-binding residues include glycine 74 and serine 77.

The protein belongs to the fluoride channel Fluc/FEX (TC 1.A.43) family.

The protein localises to the cell inner membrane. The enzyme catalyses fluoride(in) = fluoride(out). Its activity is regulated as follows. Na(+) is not transported, but it plays an essential structural role and its presence is essential for fluoride channel function. In terms of biological role, fluoride-specific ion channel. Important for reducing fluoride concentration in the cell, thus reducing its toxicity. The sequence is that of Fluoride-specific ion channel FluC 2 from Brucella melitensis biotype 1 (strain ATCC 23456 / CCUG 17765 / NCTC 10094 / 16M).